The primary structure comprises 391 residues: Heme A synthase (391 aa).

A run of 8 helical transmembrane segments spans residues 37–57, 121–141, 152–172, 186–206, 229–249, 298–318, 332–352, and 354–374; these read IRLWLMALFLLVMAMIVVGGL, RQLGRVIGLVWAVGFLGFLAA, LLALGALGGLQGGIGWWMVAS, LATHLGLAFIILGLIAWQALL, TTVLIGVAFLQIVLGALVAGI, FLHRMAGYALAALGLIFWIFG, LLAMALLAQILLGVGTVLSAA, and WQVAIAHQVGAVVIWVLILHA. His-300 lines the heme pocket. His-360 is a heme binding site.

Belongs to the COX15/CtaA family. Type 2 subfamily. Interacts with CtaB. Heme b serves as cofactor.

The protein localises to the cell membrane. The catalysed reaction is Fe(II)-heme o + 2 A + H2O = Fe(II)-heme a + 2 AH2. Its pathway is porphyrin-containing compound metabolism; heme A biosynthesis; heme A from heme O: step 1/1. Its function is as follows. Catalyzes the conversion of heme O to heme A by two successive hydroxylations of the methyl group at C8. The first hydroxylation forms heme I, the second hydroxylation results in an unstable dihydroxymethyl group, which spontaneously dehydrates, resulting in the formyl group of heme A. This chain is Heme A synthase, found in Cereibacter sphaeroides (strain KD131 / KCTC 12085) (Rhodobacter sphaeroides).